The primary structure comprises 120 residues: MITKAAKNATRKKRHARVRAKLTGTAERPRLNVYRSNQHIYAQVIDDVNGVTLVSASTLDKDLALNGTSNTEAATKVGESVAKRAVEKGVKEVVFDRGGYLYHGRVKALAEAAREAGLQF.

Positions Met-1 to Gly-24 are disordered. A compositionally biased stretch (basic residues) spans Ala-9–Ala-20.

It belongs to the universal ribosomal protein uL18 family. As to quaternary structure, part of the 50S ribosomal subunit; part of the 5S rRNA/L5/L18/L25 subcomplex. Contacts the 5S and 23S rRNAs.

Its function is as follows. This is one of the proteins that bind and probably mediate the attachment of the 5S RNA into the large ribosomal subunit, where it forms part of the central protuberance. The chain is Large ribosomal subunit protein uL18 from Bacillus mycoides (strain KBAB4) (Bacillus weihenstephanensis).